Reading from the N-terminus, the 176-residue chain is 2-C-methyl-D-erythritol 2,4-cyclodiphosphate synthase (176 aa).

2 residues coordinate a divalent metal cation: Asp-22 and His-24. 4-CDP-2-C-methyl-D-erythritol 2-phosphate-binding positions include 22–24 and 48–49; these read DVH and HS. An a divalent metal cation-binding site is contributed by His-56. 4-CDP-2-C-methyl-D-erythritol 2-phosphate contacts are provided by residues 70–72, 146–149, Phe-153, and Arg-156; these read DIG and TTSE.

Belongs to the IspF family. In terms of assembly, homotrimer. A divalent metal cation is required as a cofactor.

It catalyses the reaction 4-CDP-2-C-methyl-D-erythritol 2-phosphate = 2-C-methyl-D-erythritol 2,4-cyclic diphosphate + CMP. The protein operates within isoprenoid biosynthesis; isopentenyl diphosphate biosynthesis via DXP pathway; isopentenyl diphosphate from 1-deoxy-D-xylulose 5-phosphate: step 4/6. In terms of biological role, involved in the biosynthesis of isopentenyl diphosphate (IPP) and dimethylallyl diphosphate (DMAPP), two major building blocks of isoprenoid compounds. Catalyzes the conversion of 4-diphosphocytidyl-2-C-methyl-D-erythritol 2-phosphate (CDP-ME2P) to 2-C-methyl-D-erythritol 2,4-cyclodiphosphate (ME-CPP) with a corresponding release of cytidine 5-monophosphate (CMP). This Xylella fastidiosa (strain 9a5c) protein is 2-C-methyl-D-erythritol 2,4-cyclodiphosphate synthase.